Here is a 439-residue protein sequence, read N- to C-terminus: MVLLYQPKKQKKLRAAFTTIVQDLDYQGLGVAKIQGKTWFIENALPQEQVQVQVIEEKRQYGLGRVQKILQASPLRQTPRCAYYQICGGCQSQHIPIHLQRETKQKALFQRLTKLQKEAIEFMPMISGEAWHYRRRVRLSLYWDAKSKNLKIGFRQKNSQQIVNIRQCDVLDPLLNELLPKLHELLSTWSKPKTLGHIELVAADNGVAMLLRVTEKLAEHDRTLLLDFAFNHQVMLFVQDEKEICHLQGDLPYYQLDDGSILHFDIRDFIQVNRQLNQNMVNTALDWLDLKKKDNVLDLFCGMGNFTLPISRYVKSAVGIEGVLPMVEKARRNGERNHCHNVQFYQCDLSQSFTEQEWAKVPFDKILLDPPRSGAAFALNALCYLMAEKIVYVSCNPATLVRDVELLLKFGYQLKKVAMIDMFPHTSHLESISLFERNR.

Residues Gln10–Lys68 enclose the TRAM domain. Positions 81, 87, 90, and 168 each coordinate [4Fe-4S] cluster. 6 residues coordinate S-adenosyl-L-methionine: Gln271, Phe300, Asn305, Glu321, Asp348, and Asp369. Cys395 acts as the Nucleophile in catalysis.

Belongs to the class I-like SAM-binding methyltransferase superfamily. RNA M5U methyltransferase family. RlmD subfamily.

The catalysed reaction is uridine(1939) in 23S rRNA + S-adenosyl-L-methionine = 5-methyluridine(1939) in 23S rRNA + S-adenosyl-L-homocysteine + H(+). Its function is as follows. Catalyzes the formation of 5-methyl-uridine at position 1939 (m5U1939) in 23S rRNA. This is 23S rRNA (uracil(1939)-C(5))-methyltransferase RlmD from Histophilus somni (strain 129Pt) (Haemophilus somnus).